Here is a 214-residue protein sequence, read N- to C-terminus: Rho-related GTP-binding protein RhoJ (214 aa).

2 S-palmitoyl cysteine lipidation sites follow: Cys3 and Cys11. GTP-binding positions include 31 to 36 (AVGKTC), 46 to 53 (FPEEYVPT), 75 to 79 (DTAGQ), 133 to 136 (TQID), and 177 to 178 (AL). The Effector region motif lies at 50-58 (YVPTVFDHY). Cys211 is modified (cysteine methyl ester). A lipid anchor (S-farnesyl cysteine) is attached at Cys211. The propeptide at 212–214 (AII) is removed in mature form.

It belongs to the small GTPase superfamily. Rho family. Interacts with the CRIB domains of proteins such as Pak1 and Was/Wasp. Interacts with GLUL. Post-translationally, palmitoylated; regulates localization to the plasma membrane and may be mediated by GLUL. Highly expressed in heart with moderate levels in lung and liver. Very low levels detected in brain, spleen, skeletal muscle, kidney and testis.

It is found in the cell membrane. In terms of biological role, plasma membrane-associated small GTPase specifically involved in angiogenesis. Required for endothelial cell migration during vascular development via its interaction with GLUL. Elicits the formation of F-actin-rich structures, thereby regulating endothelial cell migration. In Mus musculus (Mouse), this protein is Rho-related GTP-binding protein RhoJ (Rhoj).